The following is a 327-amino-acid chain: Malate dehydrogenase (327 aa).

11-17 serves as a coordination point for NAD(+); sequence GAAGQIA. Substrate is bound by residues Arg-92 and Arg-98. NAD(+) contacts are provided by residues Asn-105, Gln-112, and 128-130; that span reads VGN. The substrate site is built by Asn-130 and Arg-160. Catalysis depends on His-185, which acts as the Proton acceptor.

The protein belongs to the LDH/MDH superfamily. MDH type 2 family.

It carries out the reaction (S)-malate + NAD(+) = oxaloacetate + NADH + H(+). In terms of biological role, catalyzes the reversible oxidation of malate to oxaloacetate. The protein is Malate dehydrogenase of Magnetococcus marinus (strain ATCC BAA-1437 / JCM 17883 / MC-1).